We begin with the raw amino-acid sequence, 370 residues long: Serine O-succinyltransferase (370 aa).

One can recognise an AB hydrolase-1 domain in the interval 46-355; that stretch reads AILIVTGLSP…PQGHDAFLVD (310 aa). An important for substrate specificity region spans residues 52 to 55; the sequence is GLSP. S149 serves as the catalytic Nucleophile. R218 is a binding site for substrate. Catalysis depends on residues D316 and H349. D350 is a substrate binding site.

It belongs to the AB hydrolase superfamily. MetX family. In terms of assembly, homodimer.

The protein localises to the cytoplasm. It carries out the reaction succinyl-CoA + L-serine = O-succinyl-L-serine + CoA. The catalysed reaction is L-homoserine + succinyl-CoA = O-succinyl-L-homoserine + CoA. It functions in the pathway amino-acid biosynthesis; L-cysteine biosynthesis; L-cysteine from L-serine: step 1/2. Functionally, transfers a succinyl group from succinyl-CoA to L-serine, forming succinyl-L-serine. In vitro, also has homoserine succinyl transferase activity. The polypeptide is Serine O-succinyltransferase (Stenotrophomonas maltophilia (Pseudomonas maltophilia)).